Reading from the N-terminus, the 243-residue chain is Pyridoxine 5'-phosphate synthase (243 aa).

N9 provides a ligand contact to 3-amino-2-oxopropyl phosphate. A 1-deoxy-D-xylulose 5-phosphate-binding site is contributed by 11–12 (DH). Residue R20 participates in 3-amino-2-oxopropyl phosphate binding. H45 acts as the Proton acceptor in catalysis. Positions 47 and 52 each coordinate 1-deoxy-D-xylulose 5-phosphate. E72 serves as the catalytic Proton acceptor. A 1-deoxy-D-xylulose 5-phosphate-binding site is contributed by T102. H193 serves as the catalytic Proton donor. Residues G194 and 215–216 (GH) contribute to the 3-amino-2-oxopropyl phosphate site.

This sequence belongs to the PNP synthase family. In terms of assembly, homooctamer; tetramer of dimers.

Its subcellular location is the cytoplasm. It carries out the reaction 3-amino-2-oxopropyl phosphate + 1-deoxy-D-xylulose 5-phosphate = pyridoxine 5'-phosphate + phosphate + 2 H2O + H(+). The protein operates within cofactor biosynthesis; pyridoxine 5'-phosphate biosynthesis; pyridoxine 5'-phosphate from D-erythrose 4-phosphate: step 5/5. Functionally, catalyzes the complicated ring closure reaction between the two acyclic compounds 1-deoxy-D-xylulose-5-phosphate (DXP) and 3-amino-2-oxopropyl phosphate (1-amino-acetone-3-phosphate or AAP) to form pyridoxine 5'-phosphate (PNP) and inorganic phosphate. This chain is Pyridoxine 5'-phosphate synthase, found in Vibrio parahaemolyticus serotype O3:K6 (strain RIMD 2210633).